The sequence spans 233 residues: Purine nucleoside phosphorylase DeoD-type (233 aa).

His-4 is an a purine D-ribonucleoside binding site. Phosphate contacts are provided by residues Gly-20, Arg-24, Arg-43, and 87-90 (RIGT). A purine D-ribonucleoside-binding positions include 179–181 (EME) and 203–204 (SD). Residue Asp-204 is the Proton donor of the active site.

The protein belongs to the PNP/UDP phosphorylase family. As to quaternary structure, homohexamer; trimer of homodimers.

It carries out the reaction a purine D-ribonucleoside + phosphate = a purine nucleobase + alpha-D-ribose 1-phosphate. The catalysed reaction is a purine 2'-deoxy-D-ribonucleoside + phosphate = a purine nucleobase + 2-deoxy-alpha-D-ribose 1-phosphate. Its function is as follows. Catalyzes the reversible phosphorolytic breakdown of the N-glycosidic bond in the beta-(deoxy)ribonucleoside molecules, with the formation of the corresponding free purine bases and pentose-1-phosphate. The sequence is that of Purine nucleoside phosphorylase DeoD-type from Helicobacter pylori (strain P12).